The sequence spans 665 residues: Protein-arginine deiminase type-2 (665 aa).

Ca(2+) contacts are provided by aspartate 123, aspartate 125, aspartate 127, valine 129, glutamate 131, asparagine 154, aspartate 156, glutamate 158, aspartate 166, aspartate 169, lysine 171, aspartate 177, aspartate 180, glutamate 354, aspartate 389, phenylalanine 408, leucine 411, and glutamate 412. The Nucleophile role is filled by cysteine 647.

It belongs to the protein arginine deiminase family. Homodimer. Ca(2+) serves as cofactor. As to expression, detected in keratinocytes in epidermis (at protein level).

Its subcellular location is the cytoplasm. It carries out the reaction L-arginyl-[protein] + H2O = L-citrullyl-[protein] + NH4(+). In terms of biological role, catalyzes the deimination of arginine residues of proteins. In Homo sapiens (Human), this protein is Protein-arginine deiminase type-2 (PADI2).